The primary structure comprises 148 residues: Copper transport protein ctr6 (148 aa).

Topologically, residues 1–33 (MNHGGNSTMRHCSMKMTFNTDYDNLCIVFKSWH) are extracellular. The helical transmembrane segment at 34-54 (IGNLSQFLLSLLAIAILGYLF) threads the bilayer. The Cytoplasmic portion of the chain corresponds to 55–108 (ERLRSFTSLKETEFQRGYAGQQSEGLLTHHSKSLKSGRPFRLCALYAVQLVFSY). The chain crosses the membrane as a helical span at residues 109-129 (FLMLVAMTYNAYVILAIAIGA). The Extracellular portion of the chain corresponds to 130–148 (AFGYRRSHCDTVQTVGLCH).

It belongs to the copper transporter (Ctr) (TC 1.A.56) family. SLC31A subfamily. In terms of assembly, homotrimer.

The protein localises to the vacuole membrane. Mobilizes stored copper from the vacuole to the cytoplasm under conditions of copper limitation. The sequence is that of Copper transport protein ctr6 (ctr6) from Schizosaccharomyces pombe (strain 972 / ATCC 24843) (Fission yeast).